The sequence spans 124 residues: Glutaredoxin-2 (124 aa).

Cys13 and Cys16 are joined by a disulfide.

Belongs to the glutaredoxin family. Homodimer.

Its subcellular location is the host cytoplasm. Functionally, glutaredoxin necessary for virion morphogenesis and virus replication. Functions as a thiol-disulfide transfer protein between membrane-associated OPG128 and substrates OPG095 or OPG053. The complete pathway for formation of disulfide bonds in intracellular virion membrane proteins sequentially involves oxidation of OPG072, OPG128 and OPG088. Exhibit thioltransferase and dehydroascorbate reductase activities in vitro. In Homo sapiens (Human), this protein is Glutaredoxin-2 (OPG088).